A 1234-amino-acid chain; its full sequence is ATP-dependent helicase/nuclease subunit A (1234 aa).

The UvrD-like helicase ATP-binding domain occupies 9-482 (STWTDDQWEA…IDLNKNFRSR (474 aa)). Residue 30-37 (AAAGSGKT) coordinates ATP. In terms of domain architecture, UvrD-like helicase C-terminal spans 509-800 (QAELKLGASY…RMMTIHSSKG (292 aa)).

Belongs to the helicase family. AddA subfamily. In terms of assembly, heterodimer of AddA and AddB/RexB. Mg(2+) is required as a cofactor.

It catalyses the reaction Couples ATP hydrolysis with the unwinding of duplex DNA by translocating in the 3'-5' direction.. The catalysed reaction is ATP + H2O = ADP + phosphate + H(+). Functionally, the heterodimer acts as both an ATP-dependent DNA helicase and an ATP-dependent, dual-direction single-stranded exonuclease. Recognizes the chi site generating a DNA molecule suitable for the initiation of homologous recombination. The AddA nuclease domain is required for chi fragment generation; this subunit has the helicase and 3' -&gt; 5' nuclease activities. The polypeptide is ATP-dependent helicase/nuclease subunit A (Bacillus pumilus (strain SAFR-032)).